The chain runs to 317 residues: Transaldolase (317 aa).

Catalysis depends on Lys-132, which acts as the Schiff-base intermediate with substrate.

The protein belongs to the transaldolase family. Type 1 subfamily. As to quaternary structure, homodimer.

Its subcellular location is the cytoplasm. It carries out the reaction D-sedoheptulose 7-phosphate + D-glyceraldehyde 3-phosphate = D-erythrose 4-phosphate + beta-D-fructose 6-phosphate. Its pathway is carbohydrate degradation; pentose phosphate pathway; D-glyceraldehyde 3-phosphate and beta-D-fructose 6-phosphate from D-ribose 5-phosphate and D-xylulose 5-phosphate (non-oxidative stage): step 2/3. Its function is as follows. Transaldolase is important for the balance of metabolites in the pentose-phosphate pathway. The protein is Transaldolase of Shewanella denitrificans (strain OS217 / ATCC BAA-1090 / DSM 15013).